The primary structure comprises 703 residues: DnaJ homolog subfamily C member 14 (703 aa).

Over residues M1–L11 the composition is skewed to basic and acidic residues. A disordered region spans residues M1–S229. The span at S17–S28 shows a compositional bias: low complexity. Pro residues predominate over residues H75 to P84. The span at D91–V102 shows a compositional bias: acidic residues. Residues S121–G133 are compositionally biased toward polar residues. A compositionally biased stretch (acidic residues) spans G163 to E176. The span at P193–F202 shows a compositional bias: basic residues. The segment covering L203 to A218 has biased composition (basic and acidic residues). Basic residues predominate over residues P219–R228. A run of 2 helical transmembrane segments spans residues M305–L325 and V327–W347. Positions N444–R508 constitute a J domain. Disordered regions lie at residues F622–D643 and M659–R703. Polar residues predominate over residues G673–V684. Residues P691–R703 are compositionally biased toward basic residues.

In terms of assembly, interacts with the FxxxFxxxF motif of DRD1 via its C-terminal domain.

The protein localises to the endoplasmic reticulum membrane. In terms of biological role, regulates the export of target proteins, such as DRD1, from the endoplasmic reticulum to the cell surface. The polypeptide is DnaJ homolog subfamily C member 14 (Dnajc14) (Mus musculus (Mouse)).